Consider the following 431-residue polypeptide: Glutamate-1-semialdehyde 2,1-aminomutase (431 aa).

K265 carries the N6-(pyridoxal phosphate)lysine modification.

The protein belongs to the class-III pyridoxal-phosphate-dependent aminotransferase family. HemL subfamily. As to quaternary structure, homodimer. It depends on pyridoxal 5'-phosphate as a cofactor.

Its subcellular location is the cytoplasm. The enzyme catalyses (S)-4-amino-5-oxopentanoate = 5-aminolevulinate. Its pathway is porphyrin-containing compound metabolism; protoporphyrin-IX biosynthesis; 5-aminolevulinate from L-glutamyl-tRNA(Glu): step 2/2. This Vibrio campbellii (strain ATCC BAA-1116) protein is Glutamate-1-semialdehyde 2,1-aminomutase.